Reading from the N-terminus, the 126-residue chain is MNLIKQLEQEQFDKLSAGKDIPEFGPGDTVIVNVKVVEGDRTRVQAYEGVCIGRSGGGLNESFTVRKISYGEGVERVFPVMSPMIDSIKVVRRGKVRRAKLYYLRNLRGKSARIVEKQDRQAAVGE.

The protein belongs to the bacterial ribosomal protein bL19 family.

In terms of biological role, this protein is located at the 30S-50S ribosomal subunit interface and may play a role in the structure and function of the aminoacyl-tRNA binding site. The sequence is that of Large ribosomal subunit protein bL19 from Bradyrhizobium diazoefficiens (strain JCM 10833 / BCRC 13528 / IAM 13628 / NBRC 14792 / USDA 110).